Here is a 1692-residue protein sequence, read N- to C-terminus: MVGELRYREFRVPLGPGLHAYPDELIRQRVGHNGHPEYQIRWLILRRGDDGDSSQVDCKAEHILLWMTDDEIYANCHKMLGEDGQVIRPSQESAEAGALDKSVLGEMETDVKSLIQRALRQLEECVGAVPPAPLLHTVHVLSAYASIEPLTGVFKDRRVLDLVMHMLSSPDYQIRWSAGRMIQALSSHDAGTRTQILLSLSQQEAIEKHLDFDSRCALLALFAQATLTEHPMSFEGVQLPQVPGRLLFSLVKRYLCVTFLLDRLNGNAEDQDAQNNFIPEELNAGRGRVELEFSMAMGTLISELVQAMRWDWASSRSESSSPIFQPPPTEFFRPRAQRFRRSRRFRPRTAFASVNTYALYVRDTLRPGMRVRMLEDFEEISAGDEGQFRQSNDGMPPVQVLWDSTGHTYWVHWHMLEILGFEEDIEDVVDIDDQGAMVHGGLGVAPPFQHWKPIAQLFAEPYVVPEEEDREEREHLTQAEWWELFFFIKKLNAEERQHVVELLQEFLEGEHVLDFEILPELTVPVELAQDLMLSLPQQLDDSALRDLFNCYVYRKYGPEVLVGKRNRPFVLDDQLNLFRIETDSEAQDPPSQSASPALRQLVEGLGPSGKLLVDLERALSSEAPQENEVKPCLLQLQEEPQPFLTLMRSLDTPASNKALHLTALRILMQLVNFPEALLLPWHEAMDACMTCLRSPNTDREVLQELIFFLHRLTSTSRDYAVILNQLGARDAISKVLEKHRGKLELAQELRDMVFKCEKHAHLYRKLTTNILGGCIQMVLGQIEDHRRTHRPIQIPFFDVFLRYLCQGSSAEVKKNKYWEKVEVSSNPHRASRLTDRNAKTYWESNGTAGSHFITVHMRPGVLIRQLTLLVAGEDSSYMPAWVVVCGGDSISSVNTELNAVNVMPHASRVILLENLTRFWPIVQIRIKRCQQGGINTRIRGLEVLGPKPTFWPVFREQLCRHTRLFYMVRAQAWSQDIAEDRRSLLHLSSRLNGALRQEQNFADRFLPDEEAALALSKTCWEALVSPLVQNITSPDEDSTSSLGWLLNQYLECREAAYNPQSRAAAFSSRVRHLTHLLVHVEPCEAAPPVVAISQSKGRNRSHDWSSLTTRGLPSSIMRNLTRCWRSVVEEQVNKFLTSSWKDDDFVPRYCERYYILQKSSSELFGPRAAFLLAMRNGCADALLRLPFLRAAHVSEQFARHIDQRIQGSRMGGARGMEMLAQLQRCLESVLILSPLEIATTFEHYYQHYMADRLLSVGSSWLEGAVLEQIGPCFPGRLPQQMLQTLNISEELQRRFHVYQLQQLDQELLKLEDTEKKIQVAHEDSGKEHKSKKEDAAGETAAVAMADEEEEEGKKEEGEEEEGEGEEELEEEEERYYEGTMPEVCVLVLSPRFWPVASVCHMLNPTTCLPSYLRGTINHYSNFYSKSQSHSGLEKESPRQLQWTWQGRAEVQFGDQILHVSTVQMWLLLHLNHLKAVSVESLQALSELPPEVLNKAIGPLTSSRGPLDLQEQKNIPGGVLKIRDDSEEPRPRRGNVWLIPPQTYLKAEDEEGRNLEKRRNLLNCLVVRILKAHGDEGLHIDQLVHLVLEAWEKGPCPPRGLVSSLGRGAACRSSDVLSCILHLLGKGTLRRHDDRPQMLFYAVPITVMEPHTESLNPGSSGPNPPLTFHTLQIRSRGVPYASCTGTQTFSTFR.

A CPH domain is found at 348–421; the sequence is RTAFASVNTY…HWHMLEILGF (74 aa). The DOC domain occupies 791 to 970; it reads PIQIPFFDVF…HTRLFYMVRA (180 aa). Residues 1319–1335 are compositionally biased toward basic and acidic residues; the sequence is VAHEDSGKEHKSKKEDA. The tract at residues 1319-1374 is disordered; it reads VAHEDSGKEHKSKKEDAAGETAAVAMADEEEEEGKKEEGEEEEGEGEEELEEEEER. Acidic residues predominate over residues 1357–1374; it reads GEEEEGEGEEELEEEEER. Residue Lys-1570 forms a Glycyl lysine isopeptide (Lys-Gly) (interchain with G-Cter in NEDD8) linkage.

This sequence belongs to the cullin family. Component of the 3M complex, composed of core components CUL7, CCDC8 and OBSL1. Component of the Cul7-RING(FBXW8) complex consisting of CUL7, RBX1, SKP1 and FBXW8. Within the Cul7-RING(FBXW8) complex interacts with FBXW8 and RBX1, but not with SKP1. Interacts with CUL1 (via the C-terminal domain); the interaction seems to be mediated by FBXW8; it is likely specific to FBXW8, but not other F-box proteins. Interacts (via the CPH domain) with p53/TP53; the interaction preferentially involves tetrameric and dimeric p53/TP53; this interaction recruits p53/TP53 for ubiquitination by neddylated CUL1-RBX1. The CUL7-CUL9 heterodimer seems to interact specifically with p53/TP53. Interacts with FBXW8; interaction is mutually exclusive of binding to CUL9 or p53/TP53. Interacts with CUL9; leading to inhibited CUL9 activity. Interacts with OBSL1. Interacts (as part of the 3M complex) with HDAC4 and HDAC5; it is negatively regulated by ANKRA2.

The protein localises to the cytoplasm. It localises to the cytoskeleton. It is found in the microtubule organizing center. Its subcellular location is the centrosome. The protein resides in the perinuclear region. The protein localises to the golgi apparatus. Its pathway is protein modification; protein ubiquitination. Functionally, core component of the 3M and Cul7-RING(FBXW8) complexes, which mediate the ubiquitination and subsequent proteasomal degradation of target proteins. Core component of the 3M complex, a complex required to regulate microtubule dynamics and genome integrity. It is unclear how the 3M complex regulates microtubules, it could act by controlling the level of a microtubule stabilizer. The Cul7-RING(FBXW8) complex alone lacks ubiquitination activity and does not promote polyubiquitination and proteasomal degradation of p53/TP53. However it mediates recruitment of p53/TP53 for ubiquitination by neddylated CUL1-RBX1. Interaction with CUL9 is required to inhibit CUL9 activity and ubiquitination of BIRC5. The Cul7-RING(FBXW8) complex also mediates ubiquitination and consequent degradation of target proteins such as GORASP1, IRS1 and MAP4K1/HPK1. Ubiquitination of GORASP1 regulates Golgi morphogenesis and dendrite patterning in brain. Mediates ubiquitination and degradation of IRS1 in a mTOR-dependent manner: the Cul7-RING(FBXW8) complex recognizes and binds IRS1 previously phosphorylated by S6 kinase (RPS6KB1 or RPS6KB2). The Cul7-RING(FBXW8) complex also mediates ubiquitination of MAP4K1/HPK1: recognizes and binds autophosphorylated MAP4K1/HPK1, leading to its degradation, thereby affecting cell proliferation and differentiation. Acts as a regulator in trophoblast cell epithelial-mesenchymal transition and placental development. While the Cul7-RING(FBXW8) and the 3M complexes are associated and involved in common processes, CUL7 and the Cul7-RING(FBXW8) complex may have additional functions. Probably plays a role in the degradation of proteins involved in endothelial proliferation and/or differentiation. The chain is Cullin-7 (Cul7) from Rattus norvegicus (Rat).